Here is a 176-residue protein sequence, read N- to C-terminus: Nutrient stress-induced DNA-binding protein (176 aa).

Belongs to the Dps family. As to quaternary structure, hexamer.

Involved in protection of chromosomal DNA from damage under nutrient-limited and oxidative stress conditions. Binds heme. This Synechococcus sp. (strain ATCC 27144 / PCC 6301 / SAUG 1402/1) (Anacystis nidulans) protein is Nutrient stress-induced DNA-binding protein (dpsA).